A 500-amino-acid chain; its full sequence is Probable malate:quinone oxidoreductase (500 aa).

Belongs to the MQO family. Requires FAD as cofactor.

The catalysed reaction is (S)-malate + a quinone = a quinol + oxaloacetate. The protein operates within carbohydrate metabolism; tricarboxylic acid cycle; oxaloacetate from (S)-malate (quinone route): step 1/1. This is Probable malate:quinone oxidoreductase from Bacillus mycoides (strain KBAB4) (Bacillus weihenstephanensis).